The sequence spans 123 residues: Fluoride-specific ion channel FluC 2 (123 aa).

Helical transmembrane passes span 3–23, 38–58, 62–82, and 94–114; these read LDGF…RMFI, ILIV…LNIT, LILF…SFIY, and LILL…FCLG. The Na(+) site is built by Gly72 and Ser75.

This sequence belongs to the fluoride channel Fluc/FEX (TC 1.A.43) family.

The protein localises to the cell inner membrane. It catalyses the reaction fluoride(in) = fluoride(out). Its activity is regulated as follows. Na(+) is not transported, but it plays an essential structural role and its presence is essential for fluoride channel function. Functionally, fluoride-specific ion channel. Important for reducing fluoride concentration in the cell, thus reducing its toxicity. This is Fluoride-specific ion channel FluC 2 from Prochlorococcus marinus subsp. pastoris (strain CCMP1986 / NIES-2087 / MED4).